The chain runs to 187 residues: Probable carboxylesterase Culp7 (187 aa).

Cys15 and Cys69 are joined by a disulfide. Ser80 functions as the Nucleophile in the catalytic mechanism. An intrachain disulfide couples Cys151 to Cys158. Residue Asp155 is part of the active site. His167 (proton donor/acceptor) is an active-site residue.

This sequence belongs to the cutinase family.

Its subcellular location is the cytoplasm. The protein localises to the cell membrane. It is found in the secreted. The protein resides in the cell wall. May have a role in cell wall processes. Does not exhibit cutinase activity. The sequence is that of Probable carboxylesterase Culp7 from Mycobacterium tuberculosis (strain ATCC 25618 / H37Rv).